The chain runs to 285 residues: DNA repair protein RecO (285 aa).

Belongs to the RecO family.

Involved in DNA repair and RecF pathway recombination. This chain is DNA repair protein RecO, found in Synechococcus sp. (strain JA-2-3B'a(2-13)) (Cyanobacteria bacterium Yellowstone B-Prime).